The sequence spans 351 residues: Transmembrane protein 184 homolog DDB_G0279555 (351 aa).

A helical membrane pass occupies residues 1 to 21 (MWIVAGVCSGVAILLSFYLIY). N-linked (GlcNAc...) asparagine glycosylation occurs at Asn26. Transmembrane regions (helical) follow at residues 39–59 (ILIMVPIYSVDSWLSLRFVEL), 73–93 (YVLYCFFSLIVAYIERDFDLV), 127–147 (FVLQFVFIKPIVAIISLVLET), 162–182 (YVWLTVVENISVGLSLYFLVL), and 206–226 (ILFFSFWQSIAISFLVYFGVI). Asn236 carries an N-linked (GlcNAc...) asparagine glycan. A helical membrane pass occupies residues 241 to 261 (LQDFITCVEMVILAICHHFFF). Asn301 and Asn304 each carry an N-linked (GlcNAc...) asparagine glycan. The tract at residues 327 to 351 (HNHPTTKKKDEESNLLEPEDKDIII) is disordered. A compositionally biased stretch (acidic residues) spans 339-351 (SNLLEPEDKDIII).

The protein belongs to the TMEM184 family.

It is found in the cell membrane. Probable transporter. The chain is Transmembrane protein 184 homolog DDB_G0279555 (tmem184C) from Dictyostelium discoideum (Social amoeba).